The primary structure comprises 39 residues: Phospholipase A2 (39 aa).

Ca(2+) contacts are provided by Trp-10, Gly-12, and Gly-14. The cysteines at positions 11 and 33 are disulfide-linked. His-36 is an active-site residue. A Ca(2+)-binding site is contributed by Asp-37.

Ca(2+) is required as a cofactor. In terms of tissue distribution, expressed uniformly in tentacles (at protein level).

It localises to the secreted. The protein localises to the nematocyst. It catalyses the reaction a 1,2-diacyl-sn-glycero-3-phosphocholine + H2O = a 1-acyl-sn-glycero-3-phosphocholine + a fatty acid + H(+). With respect to regulation, inhibited by morin and p-BPB. PA2 catalyzes the calcium-dependent hydrolysis of the 2-acyl groups in 3-sn-phosphoglycerides. Induces insulin secretion in isolated rat islets under high glucose concentration conditions, but not under low glucose concentration conditions. Increases perfusion pressure, renal vascular resistance, urinary flow, glomerular filtration rate, and potassium, sodium, and chloride excretion levels in rat kidney. Does not increase perfusion pressure in the rat mesenteric vascular bed. The sequence is that of Phospholipase A2 from Bunodosoma caissarum (Sea anemone).